Here is a 292-residue protein sequence, read N- to C-terminus: D-galactarolactone isomerase (292 aa).

This sequence belongs to the metallo-dependent hydrolases superfamily. Does not require a metal cofactor. serves as cofactor.

It catalyses the reaction D-galactaro-1,5-lactone = D-galactaro-1,4-lactone. The protein operates within carbohydrate acid metabolism; D-galacturonate degradation via prokaryotic oxidative pathway. In terms of biological role, catalyzes the isomerization of D-galactaro-1,5-lactone to D-galactaro-1,4-lactone. This is a step in the oxidative degradation pathway of D-galacturonate, which allows A.tumefaciens to utilize D-galacturonate as a sole carbon source. This is D-galactarolactone isomerase from Agrobacterium fabrum (strain C58 / ATCC 33970) (Agrobacterium tumefaciens (strain C58)).